Reading from the N-terminus, the 452-residue chain is Na(+)/H(+) antiporter NhaA (452 aa).

The next 11 membrane-spanning stretches (helical) occupy residues F27–I47, L78–I98, I114–F134, I141–L161, I172–F192, G201–A221, S222–I242, P316–A336, F346–A366, I388–L408, and I421–Y441.

Belongs to the NhaA Na(+)/H(+) (TC 2.A.33) antiporter family.

The protein localises to the cell inner membrane. It catalyses the reaction Na(+)(in) + 2 H(+)(out) = Na(+)(out) + 2 H(+)(in). In terms of biological role, na(+)/H(+) antiporter that extrudes sodium in exchange for external protons. This is Na(+)/H(+) antiporter NhaA from Bartonella bacilliformis (strain ATCC 35685 / KC583 / Herrer 020/F12,63).